The primary structure comprises 307 residues: Ribosomal RNA small subunit methyltransferase H (307 aa).

S-adenosyl-L-methionine contacts are provided by residues 34–36 (GGH), D54, F79, D101, and Q108.

The protein belongs to the methyltransferase superfamily. RsmH family.

The protein resides in the cytoplasm. The enzyme catalyses cytidine(1402) in 16S rRNA + S-adenosyl-L-methionine = N(4)-methylcytidine(1402) in 16S rRNA + S-adenosyl-L-homocysteine + H(+). In terms of biological role, specifically methylates the N4 position of cytidine in position 1402 (C1402) of 16S rRNA. This is Ribosomal RNA small subunit methyltransferase H from Ruthia magnifica subsp. Calyptogena magnifica.